A 577-amino-acid polypeptide reads, in one-letter code: Calcium-dependent protein kinase 22 (577 aa).

G2 carries the N-myristoyl glycine lipid modification. A Protein kinase domain is found at 105–368 (YRLGAELGRG…AKEVLEHPWL (264 aa)). ATP is bound by residues 111–119 (LGRGEFGVT) and K134. D234 serves as the catalytic Proton acceptor. The autoinhibitory domain stretch occupies residues 374 to 404 (APNVSLGEIVRSRLMQFSAMNKFKKKALGVV). EF-hand domains follow at residues 411 to 446 (EEMD…NGHP), 447 to 482 (VPET…IKKM), 483 to 518 (SNEE…ELGP), and 520 to 553 (EQVV…GSDW). Residues D424, D426, S428, N430, D435, D460, D462, N464, T466, E471, D496, D498, N500, E507, D531, D533, D535, R537, and E542 each contribute to the Ca(2+) site.

It belongs to the protein kinase superfamily. Ser/Thr protein kinase family. CDPK subfamily.

The protein localises to the membrane. The enzyme catalyses L-seryl-[protein] + ATP = O-phospho-L-seryl-[protein] + ADP + H(+). It catalyses the reaction L-threonyl-[protein] + ATP = O-phospho-L-threonyl-[protein] + ADP + H(+). Its activity is regulated as follows. Activated by calcium. Autophosphorylation may play an important role in the regulation of the kinase activity. Functionally, may play a role in signal transduction pathways that involve calcium as a second messenger. The polypeptide is Calcium-dependent protein kinase 22 (Oryza sativa subsp. japonica (Rice)).